The following is a 639-amino-acid chain: Chaperone protein HtpG (639 aa).

The interval 1–347 is a; substrate-binding; it reads MSHQETHGFQ…SNDLPLNVSR (347 aa). Residues 348–564 are b; that stretch reads EILQDNKITT…AGEMSSQMIK (217 aa). Positions 565 to 639 are c; the sequence is LMQAAGQAVT…MNKMLLASVK (75 aa).

The protein belongs to the heat shock protein 90 family. In terms of assembly, homodimer.

It is found in the cytoplasm. In terms of biological role, molecular chaperone. Has ATPase activity. This Shewanella loihica (strain ATCC BAA-1088 / PV-4) protein is Chaperone protein HtpG.